A 124-amino-acid chain; its full sequence is Succinate dehydrogenase cytochrome b556 subunit (124 aa).

At 1-29 (MTKIKQEIYNKRPTSPHLTIYKPQISSTL) the chain is on the cytoplasmic side. The helical transmembrane segment at 30–55 (SILHRMTGVALFFVVSILVWWLILSK) threads the bilayer. Topologically, residues 56 to 67 (YDNNYLQLASCC) are periplasmic. The helical transmembrane segment at 68-88 (IIKICLVAFSYSWCYHLCNGI) threads the bilayer. His83 contacts heme. Over 89-103 (RHLFWDIGYGFSIKA) the chain is Cytoplasmic. Residues 104-124 (VNITGWCVVVCSILLTMLLWV) form a helical membrane-spanning segment.

Belongs to the cytochrome b560 family. In terms of assembly, part of an enzyme complex containing four subunits: a flavoprotein, an iron-sulfur protein, plus two membrane-anchoring proteins, SdhC and SdhD. The complex can form homotrimers. It depends on heme as a cofactor.

It is found in the cell inner membrane. Its pathway is carbohydrate metabolism; tricarboxylic acid cycle. Functionally, membrane-anchoring subunit of succinate dehydrogenase (SDH). The sequence is that of Succinate dehydrogenase cytochrome b556 subunit (sdhC) from Rickettsia prowazekii (strain Madrid E).